The primary structure comprises 20 residues: Insulin-like growth factor-binding protein 2 (20 aa).

In terms of domain architecture, IGFBP N-terminal spans 2–20 (LVFYCPKCTAERQTACPKL).

In terms of assembly, binds IGF2 more than IGF1. Post-translationally, N-glycosylated.

The protein localises to the secreted. Functionally, inhibits IGF-mediated growth and developmental rates. IGF-binding proteins prolong the half-life of the IGFs and have been shown to either inhibit or stimulate the growth promoting effects of the IGFs on cell culture. They alter the interaction of IGFs with their cell surface receptors. The polypeptide is Insulin-like growth factor-binding protein 2 (igfbp2) (Oncorhynchus tshawytscha (Chinook salmon)).